Here is a 255-residue protein sequence, read N- to C-terminus: High-affinity branched-chain amino acid transport ATP-binding protein BraF (255 aa).

Positions Leu-6–Glu-254 constitute an ABC transporter domain. Position 38–45 (Gly-38–Thr-45) interacts with ATP.

The protein belongs to the ABC transporter superfamily.

Its subcellular location is the cell inner membrane. Component of the high affinity leucine, isoleucine, valine, transport system (LIV-I), which is operative without Na(+) and is specific for alanine and threonine, in addition to branched-chain amino acids. This chain is High-affinity branched-chain amino acid transport ATP-binding protein BraF (braF), found in Pseudomonas aeruginosa (strain ATCC 15692 / DSM 22644 / CIP 104116 / JCM 14847 / LMG 12228 / 1C / PRS 101 / PAO1).